The primary structure comprises 505 residues: Protein DETOXIFICATION 50 (505 aa).

The next 12 membrane-spanning stretches (helical) occupy residues 46–66 (LVLT…FLGG), 78–98 (AAAF…MGVE), 121–141 (IILL…MEKI), 155–175 (AHIF…LHPL), 194–214 (IASF…GLGI), 219–239 (LSGV…ICFF), 275–295 (ISVC…GFLL), 305–325 (GILI…SLGV), 344–364 (AAIV…AFTV), 380–400 (IMKL…GNCP), 424–444 (AFYA…GFGF), and 446–466 (GLWL…MAAT).

It belongs to the multi antimicrobial extrusion (MATE) (TC 2.A.66.1) family. In terms of tissue distribution, preferentially expressed in rosette leaves. Detected mainly in the vascular tissues and guard cells. Mostly detected at reproductive stages in young anthers, in mature pollens and during pollen germination on the pistil. Also expressed in developing seeds.

The protein resides in the cell membrane. The protein localises to the late endosome membrane. Its function is as follows. Functions as a multidrug and toxin extrusion transporter in the export of abscisic acid (ABA) in guard cells. Plays a role in ABA-mediated growth inhibition and responses to drought conditions. May act as a negative regulator of hypocotyl cell elongation in the light. This Arabidopsis thaliana (Mouse-ear cress) protein is Protein DETOXIFICATION 50.